Reading from the N-terminus, the 360-residue chain is NAD(P)H-quinone oxidoreductase subunit 1, chloroplastic (360 aa).

A run of 9 helical transmembrane segments spans residues 27–47 (IWIF…VLVI), 98–118 (FSIG…VIPF), 129–149 (IGIF…LMSG), 165–185 (AAQS…ISLL), 203–223 (FWGW…ISSL), 248–268 (YSGI…LISS), 269–289 (LFVT…ISIL), 297–317 (IFGT…FLFI), and 340–360 (FLLP…LFSL).

This sequence belongs to the complex I subunit 1 family. As to quaternary structure, NDH is composed of at least 16 different subunits, 5 of which are encoded in the nucleus.

The protein localises to the plastid. Its subcellular location is the chloroplast thylakoid membrane. It carries out the reaction a plastoquinone + NADH + (n+1) H(+)(in) = a plastoquinol + NAD(+) + n H(+)(out). The catalysed reaction is a plastoquinone + NADPH + (n+1) H(+)(in) = a plastoquinol + NADP(+) + n H(+)(out). Functionally, NDH shuttles electrons from NAD(P)H:plastoquinone, via FMN and iron-sulfur (Fe-S) centers, to quinones in the photosynthetic chain and possibly in a chloroplast respiratory chain. The immediate electron acceptor for the enzyme in this species is believed to be plastoquinone. Couples the redox reaction to proton translocation, and thus conserves the redox energy in a proton gradient. In Nasturtium officinale (Watercress), this protein is NAD(P)H-quinone oxidoreductase subunit 1, chloroplastic.